The sequence spans 364 residues: MKTNLLDFNLDQLTQHFAEMGEKPFRAKQVMRWMHQMAEDDFDAMTDLAKSLRAKLHERAEVRVPSLMTGQASSDGTRKWLLDVGTGNGVETVFIPEDDRGTLCVSSQVGCALECTFCSTGRQGFNRNLSTAEIIGQLWWANKAMGVTPKNERVVSNVVMMGMGEPLANFDNVVSAMQIMLDDHGYGLSRRRVTLSTSGLVPQMDRLREECPVALAVSLHAPNDAIRDVIVPINKKYPLSELMAACRRYLEKAPRDFITFEYVMLDGVNDRPEHARQLLELVRDVPCKFNLIPFNPFPNSGYDRSSNNAIRIFREILQEQGYVVTVRKTRGDDIDAACGQLAGQVQDKTRRQAKWTQIIEDRKS.

The active-site Proton acceptor is the Glu-91. The Radical SAM core domain maps to 97–333; it reads EDDRGTLCVS…VTVRKTRGDD (237 aa). A disulfide bond links Cys-104 and Cys-338. Cys-111, Cys-115, and Cys-118 together coordinate [4Fe-4S] cluster. S-adenosyl-L-methionine contacts are provided by residues 164–165, Ser-196, 218–220, and Asn-295; these read GE and SLH. The active-site S-methylcysteine intermediate is the Cys-338.

The protein belongs to the radical SAM superfamily. RlmN family. It depends on [4Fe-4S] cluster as a cofactor.

It localises to the cytoplasm. It catalyses the reaction adenosine(2503) in 23S rRNA + 2 reduced [2Fe-2S]-[ferredoxin] + 2 S-adenosyl-L-methionine = 2-methyladenosine(2503) in 23S rRNA + 5'-deoxyadenosine + L-methionine + 2 oxidized [2Fe-2S]-[ferredoxin] + S-adenosyl-L-homocysteine. The enzyme catalyses adenosine(37) in tRNA + 2 reduced [2Fe-2S]-[ferredoxin] + 2 S-adenosyl-L-methionine = 2-methyladenosine(37) in tRNA + 5'-deoxyadenosine + L-methionine + 2 oxidized [2Fe-2S]-[ferredoxin] + S-adenosyl-L-homocysteine. Functionally, specifically methylates position 2 of adenine 2503 in 23S rRNA and position 2 of adenine 37 in tRNAs. m2A2503 modification seems to play a crucial role in the proofreading step occurring at the peptidyl transferase center and thus would serve to optimize ribosomal fidelity. The protein is Dual-specificity RNA methyltransferase RlmN of Chromobacterium violaceum (strain ATCC 12472 / DSM 30191 / JCM 1249 / CCUG 213 / NBRC 12614 / NCIMB 9131 / NCTC 9757 / MK).